Consider the following 116-residue polypeptide: Flagellar hook-basal body complex protein FliE (116 aa).

The protein belongs to the FliE family.

The protein resides in the bacterial flagellum basal body. This chain is Flagellar hook-basal body complex protein FliE, found in Rhizobium rhizogenes (strain K84 / ATCC BAA-868) (Agrobacterium radiobacter).